A 457-amino-acid polypeptide reads, in one-letter code: Bifunctional protein GlmU (457 aa).

The tract at residues 1 to 230 (MPLSLPLHIV…AREVEGVNDL (230 aa)) is pyrophosphorylase. Residues 12-15 (LAAG), Lys26, Gln78, 83-84 (GT), 105-107 (YGD), Gly140, Glu155, Asn170, and Asn228 contribute to the UDP-N-acetyl-alpha-D-glucosamine site. Asp107 lines the Mg(2+) pocket. Asn228 provides a ligand contact to Mg(2+). The interval 231–251 (WQLTQLERAWQIRAARALCLQ) is linker. The N-acetyltransferase stretch occupies residues 252 to 457 (GARVADPARL…DSWQRPKKKT (206 aa)). 2 residues coordinate UDP-N-acetyl-alpha-D-glucosamine: Arg334 and Lys352. His364 acts as the Proton acceptor in catalysis. Residues Tyr367 and Asn378 each coordinate UDP-N-acetyl-alpha-D-glucosamine. Acetyl-CoA is bound by residues Ala381, 387 to 388 (NY), Ser406, Ala424, and Arg441.

It in the N-terminal section; belongs to the N-acetylglucosamine-1-phosphate uridyltransferase family. In the C-terminal section; belongs to the transferase hexapeptide repeat family. As to quaternary structure, homotrimer. Requires Mg(2+) as cofactor.

Its subcellular location is the cytoplasm. It carries out the reaction alpha-D-glucosamine 1-phosphate + acetyl-CoA = N-acetyl-alpha-D-glucosamine 1-phosphate + CoA + H(+). The catalysed reaction is N-acetyl-alpha-D-glucosamine 1-phosphate + UTP + H(+) = UDP-N-acetyl-alpha-D-glucosamine + diphosphate. It participates in nucleotide-sugar biosynthesis; UDP-N-acetyl-alpha-D-glucosamine biosynthesis; N-acetyl-alpha-D-glucosamine 1-phosphate from alpha-D-glucosamine 6-phosphate (route II): step 2/2. It functions in the pathway nucleotide-sugar biosynthesis; UDP-N-acetyl-alpha-D-glucosamine biosynthesis; UDP-N-acetyl-alpha-D-glucosamine from N-acetyl-alpha-D-glucosamine 1-phosphate: step 1/1. The protein operates within bacterial outer membrane biogenesis; LPS lipid A biosynthesis. Functionally, catalyzes the last two sequential reactions in the de novo biosynthetic pathway for UDP-N-acetylglucosamine (UDP-GlcNAc). The C-terminal domain catalyzes the transfer of acetyl group from acetyl coenzyme A to glucosamine-1-phosphate (GlcN-1-P) to produce N-acetylglucosamine-1-phosphate (GlcNAc-1-P), which is converted into UDP-GlcNAc by the transfer of uridine 5-monophosphate (from uridine 5-triphosphate), a reaction catalyzed by the N-terminal domain. This is Bifunctional protein GlmU from Xylella fastidiosa (strain 9a5c).